A 298-amino-acid chain; its full sequence is Small ribosomal subunit protein uS3m (298 aa).

This sequence belongs to the universal ribosomal protein uS3 family.

The protein localises to the mitochondrion. This Acanthamoeba castellanii (Amoeba) protein is Small ribosomal subunit protein uS3m (RPS3).